Reading from the N-terminus, the 509-residue chain is MLRRAVLCLALAVTAGWAWAAEEEDNVLVLKSSNFAEELAAHKHLLVEFYAPWCGHCKALAPEYAKAAGKLKAEGSDIRLAKVDATEESDLAQQYGVRGYPTIKFFKNGDTASPKEYTAGREADDIVNWLKKRTGPAATTLADSAAAESLVESSEVAVIGFFKDVESDAAKQFLLAAEATDDIPFGLTASSDVFSRYQVHQDGVVLFKKFDEGRNNFEGEVTKEKLLDFIKHNQLPLVIEFTEQTAPKIFGGEIKTHILLFLPRSAADHDGKLSGFKQAAEGFKGKILFIFIDSDHADNQRILEFFGLKKEECPAVRLITLEEEMTKYKPESDELTAEGITEFCQRFLEGKIKPHLMSQELPEDWDRQPVKVLVGKNFEEVAFDEKKNVFVEFYAPWCGHCKQLAPIWDKLGETYKEHQDIVIAKMDSTANEVEAVKVHSFPTLKFFPAGPGRTVIDYNGERTLDGFKKFLESGGQDGAGDEDGLEDLEEAEEPDLEEDDDQKAVRDEL.

The signal sequence occupies residues 1-18 (MLRRAVLCLALAVTAGWA). The 117-residue stretch at 19 to 135 (WAAEEEDNVL…IVNWLKKRTG (117 aa)) folds into the Thioredoxin 1 domain. Residues Cys54 and Cys57 each act as nucleophile in the active site. The cysteines at positions 54 and 57 are disulfide-linked. Residues Lys223 and Lys272 each carry the N6-succinyllysine modification. 2 positions are modified to phosphoserine: Ser332 and Ser358. One can recognise a Thioredoxin 2 domain in the interval 347–476 (FLEGKIKPHL…FKKFLESGGQ (130 aa)). Residues Cys398 and Cys401 each act as nucleophile in the active site. Cys398 and Cys401 are disulfide-bonded. Residue Ser428 is modified to Phosphoserine. The interval 471–509 (LESGGQDGAGDEDGLEDLEEAEEPDLEEDDDQKAVRDEL) is disordered. Acidic residues predominate over residues 479 to 501 (AGDEDGLEDLEEAEEPDLEEDDD). The short motif at 506 to 509 (RDEL) is the Prevents secretion from ER element.

This sequence belongs to the protein disulfide isomerase family. In terms of assembly, heterodimer; heterodimerizes with the protein microsomal triglyceride transfer MTTP. Homodimer. Monomers and homotetramers may also occur. Interacts with P4HA2, forming a heterotetramer consisting of 2 alpha subunits (P4HA2) and 2 beta (P4HB), where P4HB plays the role of a structural subunit; this tetramer catalyzes the formation of 4-hydroxyproline in collagen. Also constitutes the structural subunit of the microsomal triacylglycerol transfer protein MTTP in mammalian cells. Stabilizes both enzymes and retain them in the ER without contributing to the catalytic activity. Binds UBQLN1. Interacts with ERO1B. Interacts with ILDR2. Interacts with ERN1/IRE1A (via N-terminus); the interaction is enhanced by phosphorylation of P4HB by FAM20C in response to endoplasmic reticulum stress and results in attenuation of ERN1 activity. In terms of processing, phosphorylation of Ser-358 by FAM20C is induced by endoplasmic reticulum stress and results in a functional switch from oxidoreductase to molecular chaperone. It also promotes interaction with ERN1.

The protein resides in the endoplasmic reticulum. Its subcellular location is the endoplasmic reticulum lumen. It is found in the melanosome. The protein localises to the cell membrane. The catalysed reaction is Catalyzes the rearrangement of -S-S- bonds in proteins.. Functionally, this multifunctional protein catalyzes the formation, breakage and rearrangement of disulfide bonds. At the cell surface, seems to act as a reductase that cleaves disulfide bonds of proteins attached to the cell. May therefore cause structural modifications of exofacial proteins. Inside the cell, seems to form/rearrange disulfide bonds of nascent proteins. At high concentrations and following phosphorylation by FAM20C, functions as a chaperone that inhibits aggregation of misfolded proteins. At low concentrations, facilitates aggregation (anti-chaperone activity). May be involved with other chaperones in the structural modification of the TG precursor in hormone biogenesis. Also acts as a structural subunit of various enzymes such as prolyl 4-hydroxylase and microsomal triacylglycerol transfer protein MTTP. Receptor for LGALS9; the interaction retains P4HB at the cell surface of Th2 T helper cells, increasing disulfide reductase activity at the plasma membrane, altering the plasma membrane redox state and enhancing cell migration. The chain is Protein disulfide-isomerase (P4HB) from Oryctolagus cuniculus (Rabbit).